The chain runs to 437 residues: MANVVVIGAQWGDEGKGKITDLLSRSADVVVRYQGGVNAGHTIVVEDKVLKLHLIPSGILYPETICLIGSGTVVDPKVMLKEIEMLIENDIDISGLQLASTAHVTMPYHRLIDQAMEKRRGEQKIGTTGRGIGPTYADKAQRNGIRVIDLLDEQKLRERLRIPLAEKNNVLQKIYKELPLDQEKVIEEYLEYGDRLRPHVVDCSRAIHQAARNRKNILFEGAQGTLLDLDHGTYPFVTSSNPVSGGACIGAGVGPTLIDRVIGVAKAYTTRVGEGPFPTELEGSLNDQLCDRGGEYGTTTGRRRRCGWFDGVIGKYAVEVNGLDCIAITKLDVLDELEEIKVCVAYQLDGQKIEYFPSSAEDFSRCKPIFKSLPGWKSSTAECKRLEDLPPSAMAYLRFLAELMEVPIAIVSLGASRDQTIVVEDPIHGPKRALLNI.

GTP contacts are provided by residues 12–18 (GDEGKGK) and 40–42 (GHT). Asp13 (proton acceptor) is an active-site residue. Residues Asp13 and Gly40 each contribute to the Mg(2+) site. IMP-binding positions include 13 to 16 (DEGK), 38 to 41 (NAGH), Thr128, Arg142, Gln223, Thr238, and Arg302. The active-site Proton donor is the His41. 298–304 (TTTGRRR) is a substrate binding site. GTP contacts are provided by residues Arg304, 330–332 (KLD), and 412–414 (SLG).

The protein belongs to the adenylosuccinate synthetase family. As to quaternary structure, homodimer. It depends on Mg(2+) as a cofactor.

It is found in the cytoplasm. The enzyme catalyses IMP + L-aspartate + GTP = N(6)-(1,2-dicarboxyethyl)-AMP + GDP + phosphate + 2 H(+). It participates in purine metabolism; AMP biosynthesis via de novo pathway; AMP from IMP: step 1/2. Functionally, plays an important role in the de novo pathway of purine nucleotide biosynthesis. Catalyzes the first committed step in the biosynthesis of AMP from IMP. In Prochlorococcus marinus (strain MIT 9211), this protein is Adenylosuccinate synthetase.